The following is a 64-amino-acid chain: DNA-directed RNA polymerase subunit Rpo10 (64 aa).

The Zn(2+) site is built by C7, C10, C45, and C46.

It belongs to the archaeal Rpo10/eukaryotic RPB10 RNA polymerase subunit family. Part of the RNA polymerase complex. The cofactor is Zn(2+).

It localises to the cytoplasm. The catalysed reaction is RNA(n) + a ribonucleoside 5'-triphosphate = RNA(n+1) + diphosphate. DNA-dependent RNA polymerase (RNAP) catalyzes the transcription of DNA into RNA using the four ribonucleoside triphosphates as substrates. In Halorubrum lacusprofundi (strain ATCC 49239 / DSM 5036 / JCM 8891 / ACAM 34), this protein is DNA-directed RNA polymerase subunit Rpo10.